Consider the following 299-residue polypeptide: Recombination-associated protein RdgC (299 aa).

The protein belongs to the RdgC family.

It localises to the cytoplasm. Its subcellular location is the nucleoid. Functionally, may be involved in recombination. The sequence is that of Recombination-associated protein RdgC from Bordetella parapertussis (strain 12822 / ATCC BAA-587 / NCTC 13253).